The chain runs to 29 residues: Cytochrome b6-f complex subunit 8 (29 aa).

The chain crosses the membrane as a helical span at residues 3–23 (IISLAWAALMVVFTFSLSLVV).

This sequence belongs to the PetN family. The 4 large subunits of the cytochrome b6-f complex are cytochrome b6, subunit IV (17 kDa polypeptide, PetD), cytochrome f and the Rieske protein, while the 4 small subunits are PetG, PetL, PetM and PetN. The complex functions as a dimer.

Its subcellular location is the plastid. The protein resides in the chloroplast thylakoid membrane. Functionally, component of the cytochrome b6-f complex, which mediates electron transfer between photosystem II (PSII) and photosystem I (PSI), cyclic electron flow around PSI, and state transitions. This is Cytochrome b6-f complex subunit 8 from Nicotiana tomentosiformis (Tobacco).